We begin with the raw amino-acid sequence, 110 residues long: Large ribosomal subunit protein uL22 (110 aa).

It belongs to the universal ribosomal protein uL22 family. Part of the 50S ribosomal subunit.

Functionally, this protein binds specifically to 23S rRNA; its binding is stimulated by other ribosomal proteins, e.g. L4, L17, and L20. It is important during the early stages of 50S assembly. It makes multiple contacts with different domains of the 23S rRNA in the assembled 50S subunit and ribosome. The globular domain of the protein is located near the polypeptide exit tunnel on the outside of the subunit, while an extended beta-hairpin is found that lines the wall of the exit tunnel in the center of the 70S ribosome. In Oleidesulfovibrio alaskensis (strain ATCC BAA-1058 / DSM 17464 / G20) (Desulfovibrio alaskensis), this protein is Large ribosomal subunit protein uL22.